A 198-amino-acid chain; its full sequence is Recombination protein RecR (198 aa).

A C4-type zinc finger spans residues Cys-57 to Cys-72. The region spanning Ser-80–Pro-175 is the Toprim domain.

The protein belongs to the RecR family.

Its function is as follows. May play a role in DNA repair. It seems to be involved in an RecBC-independent recombinational process of DNA repair. It may act with RecF and RecO. This is Recombination protein RecR from Brevibacillus brevis (strain 47 / JCM 6285 / NBRC 100599).